Here is a 480-residue protein sequence, read N- to C-terminus: tRNA (guanine(37)-N(1))-methyltransferase (480 aa).

The transit peptide at 1–18 directs the protein to the mitochondrion; it reads MAAVWRRSARLFILLQRH. S-adenosyl-L-methionine contacts are provided by residues His273, 311–312, 339–340, and Asn367; these read DL and DG. Residues 458 to 480 are disordered; sequence HTQDRDTSEEPCPKKQKCEDSTN.

The protein belongs to the class I-like SAM-binding methyltransferase superfamily. TRM5/TYW2 family. In terms of assembly, monomer.

It is found in the mitochondrion matrix. Its subcellular location is the nucleus. The protein resides in the cytoplasm. It carries out the reaction guanosine(37) in tRNA + S-adenosyl-L-methionine = N(1)-methylguanosine(37) in tRNA + S-adenosyl-L-homocysteine + H(+). Functionally, involved in mitochondrial tRNA methylation. Specifically methylates the N1 position of guanosine-37 in various tRNAs. Methylation is not dependent on the nature of the nucleoside 5' of the target nucleoside. This is the first step in the biosynthesis of wybutosine (yW), a modified base adjacent to the anticodon of tRNAs and required for accurate decoding. The chain is tRNA (guanine(37)-N(1))-methyltransferase (trmt5) from Danio rerio (Zebrafish).